Here is a 95-residue protein sequence, read N- to C-terminus: Citrate lyase acyl carrier protein (95 aa).

The residue at position 14 (Ser14) is an O-(phosphoribosyl dephospho-coenzyme A)serine.

The protein belongs to the CitD family. In terms of assembly, oligomer with a subunit composition of (alpha,beta,gamma)6.

The protein resides in the cytoplasm. In terms of biological role, covalent carrier of the coenzyme of citrate lyase. In Haemophilus influenzae (strain 86-028NP), this protein is Citrate lyase acyl carrier protein.